A 361-amino-acid polypeptide reads, in one-letter code: Peptide chain release factor 1 (361 aa).

Glutamine 236 carries the post-translational modification N5-methylglutamine.

It belongs to the prokaryotic/mitochondrial release factor family. Methylated by PrmC. Methylation increases the termination efficiency of RF1.

It localises to the cytoplasm. Peptide chain release factor 1 directs the termination of translation in response to the peptide chain termination codons UAG and UAA. In Lactobacillus acidophilus (strain ATCC 700396 / NCK56 / N2 / NCFM), this protein is Peptide chain release factor 1.